The sequence spans 314 residues: MPIRIDKKLPAVEILRTENIFVMDDQRAAHQDIRPLKILILNLMPQKMVTETQLLRHLANTPLQLDIDFLYMESHRSKTTRSEHMETFYKTFLEVKDEYFDGMIITGAPVEHLPFEEVDYWEEFRQMLEWSKTHVYSTLHICWGAQAGLYLRYGVEKYQMDSKLSGIYPQDTLKEGHLLFRGFDDSYVSPHSRHTEISKEEVLNKTNLEILSEGPQVGVSILASRDLREIYSFGHLEYDRDTLAKEYFRDRDAGFDPHIPENYFKDDDVNQVPCLCWSSSAALFFSNWVNHAVYQETPFXWRKIXDDASAYGYL.

The active-site Acyl-thioester intermediate is the Cys142. Positions 163 and 192 each coordinate substrate. The Proton acceptor role is filled by His235. Residue Glu237 is part of the active site. Arg249 contacts substrate.

Belongs to the MetA family.

The protein localises to the cytoplasm. It catalyses the reaction L-homoserine + acetyl-CoA = O-acetyl-L-homoserine + CoA. It functions in the pathway amino-acid biosynthesis; L-methionine biosynthesis via de novo pathway; O-acetyl-L-homoserine from L-homoserine: step 1/1. In terms of biological role, transfers an acetyl group from acetyl-CoA to L-homoserine, forming acetyl-L-homoserine. This is Homoserine O-acetyltransferase from Streptococcus pneumoniae serotype 19F (strain G54).